Reading from the N-terminus, the 398-residue chain is Acetate kinase (398 aa).

Residue Asn7 participates in Mg(2+) binding. Lys14 serves as a coordination point for ATP. Residue Arg91 coordinates substrate. Asp148 acts as the Proton donor/acceptor in catalysis. Residues 208 to 212, 283 to 285, and 331 to 335 each bind ATP; these read HIGNG, DMR, and GVGEN. Residue Glu384 participates in Mg(2+) binding.

This sequence belongs to the acetokinase family. As to quaternary structure, homodimer. The cofactor is Mg(2+). Mn(2+) serves as cofactor.

It localises to the cytoplasm. The enzyme catalyses acetate + ATP = acetyl phosphate + ADP. The protein operates within metabolic intermediate biosynthesis; acetyl-CoA biosynthesis; acetyl-CoA from acetate: step 1/2. In terms of biological role, catalyzes the formation of acetyl phosphate from acetate and ATP. Can also catalyze the reverse reaction. The chain is Acetate kinase from Phocaeicola vulgatus (strain ATCC 8482 / DSM 1447 / JCM 5826 / CCUG 4940 / NBRC 14291 / NCTC 11154) (Bacteroides vulgatus).